A 102-amino-acid polypeptide reads, in one-letter code: NADH-quinone oxidoreductase subunit K 2 (102 aa).

The next 3 helical transmembrane spans lie at 4-24, 30-50, and 62-82; these read ITPV…TVGV, IVII…NLIA, and IFAI…LGIL.

Belongs to the complex I subunit 4L family. As to quaternary structure, NDH-1 is composed of 14 different subunits. Subunits NuoA, H, J, K, L, M, N constitute the membrane sector of the complex.

Its subcellular location is the cell inner membrane. The catalysed reaction is a quinone + NADH + 5 H(+)(in) = a quinol + NAD(+) + 4 H(+)(out). Its function is as follows. NDH-1 shuttles electrons from NADH, via FMN and iron-sulfur (Fe-S) centers, to quinones in the respiratory chain. The immediate electron acceptor for the enzyme in this species is believed to be ubiquinone. Couples the redox reaction to proton translocation (for every two electrons transferred, four hydrogen ions are translocated across the cytoplasmic membrane), and thus conserves the redox energy in a proton gradient. In Solibacter usitatus (strain Ellin6076), this protein is NADH-quinone oxidoreductase subunit K 2.